The sequence spans 308 residues: tRNA dimethylallyltransferase (308 aa).

Residue 9–16 (GPTAVGKT) participates in ATP binding. A substrate-binding site is contributed by 11–16 (TAVGKT). The segment at 34-37 (DSMQ) is interaction with substrate tRNA.

The protein belongs to the IPP transferase family. Monomer. Mg(2+) serves as cofactor.

It catalyses the reaction adenosine(37) in tRNA + dimethylallyl diphosphate = N(6)-dimethylallyladenosine(37) in tRNA + diphosphate. Functionally, catalyzes the transfer of a dimethylallyl group onto the adenine at position 37 in tRNAs that read codons beginning with uridine, leading to the formation of N6-(dimethylallyl)adenosine (i(6)A). The polypeptide is tRNA dimethylallyltransferase (Lactobacillus delbrueckii subsp. bulgaricus (strain ATCC 11842 / DSM 20081 / BCRC 10696 / JCM 1002 / NBRC 13953 / NCIMB 11778 / NCTC 12712 / WDCM 00102 / Lb 14)).